The primary structure comprises 467 residues: tRNA-2-methylthio-N(6)-dimethylallyladenosine synthase (467 aa).

A disordered region spans residues 1–20 (MSDDTTQIEPAMAQETSPRA). The 121-residue stretch at 23–143 (RKVFVKTYGC…LPNALARVRG (121 aa)) folds into the MTTase N-terminal domain. Cysteine 32, cysteine 68, cysteine 106, cysteine 184, cysteine 188, and cysteine 191 together coordinate [4Fe-4S] cluster. Residues 170–402 (RKRGVSAFLT…QALLSAQQYA (233 aa)) form the Radical SAM core domain. The TRAM domain maps to 405-467 (DSMIGRKMDV…TNSLIAQKLA (63 aa)).

This sequence belongs to the methylthiotransferase family. MiaB subfamily. Monomer. It depends on [4Fe-4S] cluster as a cofactor.

It is found in the cytoplasm. It catalyses the reaction N(6)-dimethylallyladenosine(37) in tRNA + (sulfur carrier)-SH + AH2 + 2 S-adenosyl-L-methionine = 2-methylsulfanyl-N(6)-dimethylallyladenosine(37) in tRNA + (sulfur carrier)-H + 5'-deoxyadenosine + L-methionine + A + S-adenosyl-L-homocysteine + 2 H(+). Catalyzes the methylthiolation of N6-(dimethylallyl)adenosine (i(6)A), leading to the formation of 2-methylthio-N6-(dimethylallyl)adenosine (ms(2)i(6)A) at position 37 in tRNAs that read codons beginning with uridine. The polypeptide is tRNA-2-methylthio-N(6)-dimethylallyladenosine synthase (Brucella canis (strain ATCC 23365 / NCTC 10854 / RM-666)).